We begin with the raw amino-acid sequence, 298 residues long: Acetylglutamate kinase (298 aa).

Residues 69–70 (GG), Arg-91, and Asn-196 contribute to the substrate site.

Belongs to the acetylglutamate kinase family. ArgB subfamily.

The protein localises to the cytoplasm. It catalyses the reaction N-acetyl-L-glutamate + ATP = N-acetyl-L-glutamyl 5-phosphate + ADP. It functions in the pathway amino-acid biosynthesis; L-arginine biosynthesis; N(2)-acetyl-L-ornithine from L-glutamate: step 2/4. Functionally, catalyzes the ATP-dependent phosphorylation of N-acetyl-L-glutamate. The chain is Acetylglutamate kinase from Nitrobacter winogradskyi (strain ATCC 25391 / DSM 10237 / CIP 104748 / NCIMB 11846 / Nb-255).